A 64-amino-acid polypeptide reads, in one-letter code: Large ribosomal subunit protein uL29 (64 aa).

The protein belongs to the universal ribosomal protein uL29 family.

This Pseudomonas entomophila (strain L48) protein is Large ribosomal subunit protein uL29.